Reading from the N-terminus, the 308-residue chain is Pseudouridine-5'-phosphate glycosidase (308 aa).

Glutamate 25 (proton donor) is an active-site residue. Substrate is bound by residues lysine 86 and valine 106. Mn(2+) is bound at residue aspartate 142. 144 to 146 is a substrate binding site; the sequence is SAD. Catalysis depends on lysine 163, which acts as the Nucleophile.

This sequence belongs to the pseudouridine-5'-phosphate glycosidase family. In terms of assembly, homotrimer. Mn(2+) is required as a cofactor.

It carries out the reaction D-ribose 5-phosphate + uracil = psi-UMP + H2O. In terms of biological role, catalyzes the reversible cleavage of pseudouridine 5'-phosphate (PsiMP) to ribose 5-phosphate and uracil. Functions biologically in the cleavage direction, as part of a pseudouridine degradation pathway. The polypeptide is Pseudouridine-5'-phosphate glycosidase (Symbiobacterium thermophilum (strain DSM 24528 / JCM 14929 / IAM 14863 / T)).